Reading from the N-terminus, the 201-residue chain is Small ribosomal subunit protein uS4c (201 aa).

Residues 17–44 (ALPGLTNKKPRNGSDLRNQSRSGKKSQY) are disordered. Residues 89-149 (MRLDNILFRL…DEQKSRALIQ (61 aa)) form the S4 RNA-binding domain.

It belongs to the universal ribosomal protein uS4 family. Part of the 30S ribosomal subunit. Contacts protein S5. The interaction surface between S4 and S5 is involved in control of translational fidelity.

It localises to the plastid. Its subcellular location is the chloroplast. Functionally, one of the primary rRNA binding proteins, it binds directly to 16S rRNA where it nucleates assembly of the body of the 30S subunit. In terms of biological role, with S5 and S12 plays an important role in translational accuracy. This Nicotiana sylvestris (Wood tobacco) protein is Small ribosomal subunit protein uS4c (rps4).